Here is a 100-residue protein sequence, read N- to C-terminus: uncharacterized protein (100 aa).

The next 3 membrane-spanning stretches (helical) occupy residues 11-33 (VWSI…SVLM), 45-64 (WMLA…SLVY), and 68-90 (WEGA…GYLI).

The protein resides in the cell membrane. This is an uncharacterized protein from Bacillus subtilis (strain 168).